The sequence spans 434 residues: Trigger factor (434 aa).

The PPIase FKBP-type domain occupies 160-245; that stretch reads GDKAKINFVG…LNEVQAANLP (86 aa).

The protein belongs to the FKBP-type PPIase family. Tig subfamily.

The protein resides in the cytoplasm. It catalyses the reaction [protein]-peptidylproline (omega=180) = [protein]-peptidylproline (omega=0). Involved in protein export. Acts as a chaperone by maintaining the newly synthesized protein in an open conformation. Functions as a peptidyl-prolyl cis-trans isomerase. The sequence is that of Trigger factor from Shewanella halifaxensis (strain HAW-EB4).